Reading from the N-terminus, the 543-residue chain is Heparanase (543 aa).

An N-terminal signal peptide occupies residues 1–35; that stretch reads MLLRSKPALPPPLMLLLLGPLGPLSPGALPRPAQA. Heparan sulfate group contacts are provided by residues 62–64 and T97; that span reads DAN. A propeptide spans 110-157 (linker peptide); it reads STFEERSYWQSQVNQDICKYGSIPPDVEEKLRLEWPYQEQLLLREHYQ. C127 and C179 are disulfide-bonded. 158-162 serves as a coordination point for heparan sulfate group; the sequence is KKFKN. N162, N178, N200, and N217 each carry an N-linked (GlcNAc...) asparagine glycan. Residue E225 is the Proton donor of the active site. The N-linked (GlcNAc...) asparagine glycan is linked to N238. Heparan sulfate group contacts are provided by residues 270 to 280, H296, and R303; that span reads QPRRKTAKMLK. The segment at 288–417 is required for heterodimerization with the heparanase 8 kDa subunit; sequence EVIDSVTWHH…LLFKKLVGTK (130 aa). E343 (nucleophile) is an active-site residue. Residues 348–350 and 389–391 contribute to the heparan sulfate group site; these read YGG and GNY. C437 and C542 are oxidised to a cystine. N-linked (GlcNAc...) asparagine glycosylation is present at N459. Residues 527–543 form a required for transferring proheparanase to the Golgi apparatus, secretion and subsequent enzyme activity and for enhancement of PKB/AKT1 phosphorylation region; it reads FSYSFFVIRNAKVAACI.

Belongs to the glycosyl hydrolase 79 family. In terms of assembly, heterodimer; heterodimer formation between the 8 kDa and the 50 kDa subunits is required for enzyme activity. Interacts with TF; the interaction, inhibited by heparin, enhances the generation of activated factor X and activates coagulation. Interacts with HRG; the interaction is enhanced at acidic pH, partially inhibits binding of HPSE to cell surface receptors and modulates its enzymatic activity. Interacts with SDC1; the interaction enhances the shedding of SDC1. Interacts with HPSE2. Post-translationally, proteolytically processed. The cleavage of the 65 kDa form leads to the generation of a linker peptide, and 8 kDa and 50 kDa products. The active form, the 8/50 kDa heterodimer, is resistant to degradation. Complete removal of the linker peptide appears to be a prerequisite to the complete activation of the enzyme. In terms of processing, N-glycosylated. Glycosylation of the 50 kDa subunit appears to be essential for its solubility. As to expression, highly expressed in placenta and spleen and weakly expressed in lymph node, thymus, peripheral blood leukocytes, bone marrow, endothelial cells, fetal liver and tumor tissues. Also expressed in hair follicles, specifically in both Henle's and Huxley's layers of inner the root sheath (IRS) at anagen phase.

Its subcellular location is the lysosome membrane. The protein localises to the secreted. It is found in the nucleus. The catalysed reaction is endohydrolysis of (1-&gt;4)-beta-D-glycosidic bonds of heparan sulfate chains in heparan sulfate proteoglycan.. Its activity is regulated as follows. Inhibited by EDTA, laminarin sulfate and, to a lower extent, by heparin and sulfamin and activated by calcium and magnesium. In terms of biological role, endoglycosidase that cleaves heparan sulfate proteoglycans (HSPGs) into heparan sulfate side chains and core proteoglycans. Participates in extracellular matrix (ECM) degradation and remodeling. Selectively cleaves the linkage between a glucuronic acid unit and an N-sulfo glucosamine unit carrying either a 3-O-sulfo or a 6-O-sulfo group. Can also cleave the linkage between a glucuronic acid unit and an N-sulfo glucosamine unit carrying a 2-O-sulfo group, but not linkages between a glucuronic acid unit and a 2-O-sulfated iduronic acid moiety. It is essentially inactive at neutral pH but becomes active under acidic conditions such as during tumor invasion and in inflammatory processes. Facilitates cell migration associated with metastasis, wound healing and inflammation. Enhances shedding of syndecans, and increases endothelial invasion and angiogenesis in myelomas. Acts as a procoagulant by increasing the generation of activation factor X in the presence of tissue factor and activation factor VII. Increases cell adhesion to the extracellular matrix (ECM), independent of its enzymatic activity. Induces AKT1/PKB phosphorylation via lipid rafts increasing cell mobility and invasion. Heparin increases this AKT1/PKB activation. Regulates osteogenesis. Enhances angiogenesis through up-regulation of SRC-mediated activation of VEGF. Implicated in hair follicle inner root sheath differentiation and hair homeostasis. The protein is Heparanase (HPSE) of Homo sapiens (Human).